Consider the following 276-residue polypeptide: Cell division protein FtsQ (276 aa).

The Cytoplasmic segment spans residues 1-27; that stretch reads MSQAALNTRNSEEEVSSRRNNGTRLAG. A helical transmembrane segment spans residues 28–48; it reads ILFLLTVLTTVLVSGWVVLGW. Over 49-276 the chain is Periplasmic; it reads MEDAQRLPLS…QQNQAQAEQQ (228 aa). The region spanning 55–126 is the POTRA domain; the sequence is LPLSKLVLTG…DELKIHLVEY (72 aa). Residues 255 to 276 are disordered; sequence GWAPLPPEESTQQQNQAQAEQQ. The segment covering 266–276 has biased composition (low complexity); it reads QQQNQAQAEQQ.

The protein belongs to the FtsQ/DivIB family. FtsQ subfamily. In terms of assembly, part of a complex composed of FtsB, FtsL and FtsQ. The complex can be formed before its localization to the division site. This tripartite complex can be divided further into a subcomplex of FtsB and FtsL, which forms in the absence of FtsQ. Interacts with FtsA, FtsK, FtsL, FtsB, FtsW, FtsI, FtsN, FtsX and YmgF.

The protein localises to the cell inner membrane. Its function is as follows. Essential cell division protein. May link together the upstream cell division proteins, which are predominantly cytoplasmic, with the downstream cell division proteins, which are predominantly periplasmic. May control correct divisome assembly. The protein is Cell division protein FtsQ of Escherichia coli (strain K12).